The chain runs to 383 residues: MKNVLPPFIEIYRALIATPSISATEASLDQSNASLITLLAGWFSDLGFNVEVQPVPGTRNKFNMLASSGHGAGGLLLAGHTDTVPFDDGRWTRDPFTLTEHDNKLYGLGTADMKGFFAFILDALRAVDVTQLKKPLYILATADEETSMAGARYFSETTALRPDCAIIGEPTSLQPIRAHKGHISNVVRVLGQSGHSSDPARGVNAIELMHDAIGHIMQLRDSLKARYHYEAFTVPYPTLNLGHIHGGDASNRICACCELHMDIRPLPGMTLNDLNGLLNDALAPVSERWPGRLTVAELHPPIPGYECPPDHQLVEVVEKLLGTKTDVVNYCTEAPFMQTLCPTLVLGPGSINQAHQPDEYLETRFIKPTRELITQVVHHFCWH.

His-80 is a Zn(2+) binding site. Residue Asp-82 is part of the active site. Asp-112 is a binding site for Zn(2+). Residue Glu-144 is part of the active site. 3 residues coordinate Zn(2+): Glu-145, Glu-169, and His-355.

The protein belongs to the peptidase M20A family. ArgE subfamily. Homodimer. It depends on Zn(2+) as a cofactor. Requires Co(2+) as cofactor. The cofactor is glutathione.

It is found in the cytoplasm. The enzyme catalyses N(2)-acetyl-L-ornithine + H2O = L-ornithine + acetate. It functions in the pathway amino-acid biosynthesis; L-arginine biosynthesis; L-ornithine from N(2)-acetyl-L-ornithine (linear): step 1/1. Its function is as follows. Catalyzes the hydrolysis of the amide bond of N(2)-acetylated L-amino acids. Cleaves the acetyl group from N-acetyl-L-ornithine to form L-ornithine, an intermediate in L-arginine biosynthesis pathway, and a branchpoint in the synthesis of polyamines. This is Acetylornithine deacetylase from Salmonella arizonae (strain ATCC BAA-731 / CDC346-86 / RSK2980).